Here is an 85-residue protein sequence, read N- to C-terminus: Transcriptional repressor protein KorC (85 aa).

Positions 28–47 form a DNA-binding region, H-T-H motif; that stretch reads VLHLAGLTGGQAARILGLGA.

Acts with KorA as corepressor in the control of the kilC and kilE operons. This chain is Transcriptional repressor protein KorC (korC), found in Escherichia coli.